A 1390-amino-acid chain; its full sequence is DNA-directed RNA polymerase III subunit RPC1 (1390 aa).

Cys69, Cys72, Cys79, His82, Cys109, and Cys112 together coordinate Zn(2+). DNA is bound at residue Lys144. Residues Cys156 and Cys159 each contribute to the Zn(2+) site. Positions 167, 326, 348, 353, 360, and 366 each coordinate DNA. Residue Lys445 is modified to N6-acetyllysine. Arg464 contacts RNA. Residues Asp499, Asp501, and Asp503 each contribute to the Mg(2+) site. Asp503 contacts RNA. The interval 843–884 is bridging helix; sequence TPTEFFFHTMAGREGLVDTAVKTAETGYMQRRLVKSLEDLCS. Positions 1029–1070 are trigger loop; that stretch reads PGSAVGALCAQSIGEPGTQMTLKTFHFAGVASMNITLGVPRI. DNA is bound by residues Arg1159, Arg1305, and Lys1323.

It belongs to the RNA polymerase beta' chain family. As to quaternary structure, component of the RNA polymerase III (Pol III) (Pol III) complex consisting of 17 subunits: a ten-subunit catalytic core composed of POLR3A/RPC1, POLR3B/RPC2, POLR1C/RPAC1, POLR1D/RPAC2, POLR3K/RPC10, POLR2E/RPABC1, POLR2F/RPABC2, POLR2H/RPABC3, POLR2K/RPABC4 and POLR2L/RPABC5; a mobile stalk composed of two subunits POLR3H/RPC8 and CRCP/RPC9, protruding from the core and functioning primarily in transcription initiation; and additional subunits homologous to general transcription factors of the RNA polymerase II machinery, POLR3C/RPC3-POLR3F/RPC6-POLR3G/RPC7 heterotrimer required for transcription initiation and POLR3D/RPC4-POLR3E/RPC5 heterodimer involved in both transcription initiation and termination. Pol III exists as two alternative complexes defined by the mutually exclusive incorporation of subunit POLR3G/RPC7alpha or POLR3GL/RPC7beta. The presence of POLR3G/RPC7alpha or POLR3GL/RPC7beta differentially modulates the transcription potential of Pol III, with POLR3G/RPC7alpha specifically associated with transcription of snaR-A non-coding RNAs. As part of the RNA polymerase III complex, interacts with PKP2. Mg(2+) serves as cofactor. As to expression, expressed in the brain, in the cortex and the white matter (at protein level).

Its subcellular location is the nucleus. It localises to the cytoplasm. The protein localises to the cytosol. The enzyme catalyses RNA(n) + a ribonucleoside 5'-triphosphate = RNA(n+1) + diphosphate. Its function is as follows. Catalytic core component of RNA polymerase III (Pol III), a DNA-dependent RNA polymerase which synthesizes small non-coding RNAs using the four ribonucleoside triphosphates as substrates. Synthesizes 5S rRNA, snRNAs, tRNAs and miRNAs from at least 500 distinct genomic loci. Pol III-mediated transcription cycle proceeds through transcription initiation, transcription elongation and transcription termination stages. During transcription initiation, Pol III is recruited to DNA promoters type I, II or III with the help of general transcription factors and other specific initiation factors. Once the polymerase has escaped from the promoter it enters the elongation phase during which RNA is actively polymerized, based on complementarity with the template DNA strand. Transcription termination involves the release of the RNA transcript and polymerase from the DNA. Forms Pol III active center together with the second largest subunit POLR3B/RPC2. Appends one nucleotide at a time to the 3' end of the nascent RNA, with POLR3A/RPC1 contributing a Mg(2+)-coordinating DxDGD motif, and POLR3B/RPC2 participating in the coordination of a second Mg(2+) ion and providing lysine residues believed to facilitate Watson-Crick base pairing between the incoming nucleotide and template base. Typically, Mg(2+) ions direct a 5' nucleoside triphosphate to form a phosphodiester bond with the 3' hydroxyl of the preceding nucleotide of the nascent RNA, with the elimination of pyrophosphate. Pol III plays a key role in sensing and limiting infection by intracellular bacteria and DNA viruses. Acts as a nuclear and cytosolic DNA sensor involved in innate immune response. Can sense non-self dsDNA that serves as template for transcription into dsRNA. The non-self RNA polymerase III transcripts, such as Epstein-Barr virus-encoded RNAs (EBERs) induce type I interferon and NF-kappa-B through the RIG-I pathway. This Homo sapiens (Human) protein is DNA-directed RNA polymerase III subunit RPC1.